Here is a 247-residue protein sequence, read N- to C-terminus: Probable proteasome subunit alpha type-5 (247 aa).

At Thr-55 the chain carries Phosphothreonine.

It belongs to the peptidase T1A family. The 26S proteasome consists of a 20S proteasome core and two 19S regulatory subunits. The 20S proteasome core is composed of 28 subunits that are arranged in four stacked rings, resulting in a barrel-shaped structure. The two end rings are each formed by seven alpha subunits, and the two central rings are each formed by seven beta subunits. The catalytic chamber with the active sites is on the inside of the barrel.

The protein resides in the cytoplasm. Its subcellular location is the nucleus. Functionally, the proteasome is a multicatalytic proteinase complex which is characterized by its ability to cleave peptides with Arg, Phe, Tyr, Leu, and Glu adjacent to the leaving group at neutral or slightly basic pH. The proteasome has an ATP-dependent proteolytic activity. The protein is Probable proteasome subunit alpha type-5 (pup2) of Schizosaccharomyces pombe (strain 972 / ATCC 24843) (Fission yeast).